A 425-amino-acid polypeptide reads, in one-letter code: Serine--tRNA ligase (425 aa).

233–235 (TAE) lines the L-serine pocket. Residue 264-266 (RRE) coordinates ATP. Residue glutamate 287 participates in L-serine binding. Residue 351–354 (EISS) participates in ATP binding. Serine 385 serves as a coordination point for L-serine.

This sequence belongs to the class-II aminoacyl-tRNA synthetase family. Type-1 seryl-tRNA synthetase subfamily. As to quaternary structure, homodimer. The tRNA molecule binds across the dimer.

The protein localises to the cytoplasm. The catalysed reaction is tRNA(Ser) + L-serine + ATP = L-seryl-tRNA(Ser) + AMP + diphosphate + H(+). The enzyme catalyses tRNA(Sec) + L-serine + ATP = L-seryl-tRNA(Sec) + AMP + diphosphate + H(+). It participates in aminoacyl-tRNA biosynthesis; selenocysteinyl-tRNA(Sec) biosynthesis; L-seryl-tRNA(Sec) from L-serine and tRNA(Sec): step 1/1. In terms of biological role, catalyzes the attachment of serine to tRNA(Ser). Is also able to aminoacylate tRNA(Sec) with serine, to form the misacylated tRNA L-seryl-tRNA(Sec), which will be further converted into selenocysteinyl-tRNA(Sec). The chain is Serine--tRNA ligase from Prochlorococcus marinus (strain MIT 9515).